Consider the following 175-residue polypeptide: uncharacterized protein (175 aa).

Positions 1-14 are enriched in polar residues; it reads MNTSSRIQLPSSND. 2 disordered regions span residues 1–31 and 127–175; these read MNTS…SKRS and ARSR…QSKR. The segment covering 16–27 has biased composition (basic and acidic residues); it reads HVYDGRSNEPKA. Residues 130–149 show a composition bias toward low complexity; that stretch reads RASSVSNSRLNSRTNSSVSL. The segment covering 154-175 has biased composition (polar residues); the sequence is GSSSWKNKIKNAVSNVTDQSKR.

Its subcellular location is the cytoplasm. The protein localises to the nucleus. This is an uncharacterized protein from Schizosaccharomyces pombe (strain 972 / ATCC 24843) (Fission yeast).